Reading from the N-terminus, the 150-residue chain is MESKDASTSATSIDQLCKTFNLSLHTLQIQCVFCRNALTTAEIYAYAYKNLKVVWRDNFPFAACACCLELQGKINQYRHFNYAAYAPTVEEETNEDILKVLIRCYLCHKPLCEIEKLKHILGKARFIKLNNQWKGRCLHCWTTCMEDLLP.

Zinc fingers lie at residues 31-67 and 104-140; these read CVFCRNALTTAEIYAYAYKNLKVVWRDNFPFAACACC and CYLCHKPLCEIEKLKHILGKARFIKLNNQWKGRCLHC.

The protein belongs to the papillomaviridae E6 protein family. Forms homodimers. Interacts with ubiquitin-protein ligase UBE3A/E6-AP; this interaction stimulates UBE3A ubiquitin activity. Interacts with host TP53 and EP300; this interaction inhibits TP53 activity.

It is found in the host cytoplasm. Its subcellular location is the host nucleus. In terms of biological role, plays a major role in the induction and maintenance of cellular transformation. E6 associates with host UBE3A/E6-AP ubiquitin-protein ligase and modulates its activity. Sequesters tumor suppressor TP53 in the host cytoplasm and modulates its activity by interacting with host EP300 that results in the reduction of TP53 acetylation and activation. In turn, apoptosis induced by DNA damage is inhibited. E6 also protects host keratinocytes from apoptosis by mediating the degradation of host BAK1. May also inhibit host immune response. This chain is Protein E6, found in Human papillomavirus 11.